The following is a 143-amino-acid chain: Large ribosomal subunit protein uL13 (143 aa).

This sequence belongs to the universal ribosomal protein uL13 family. As to quaternary structure, part of the 50S ribosomal subunit.

In terms of biological role, this protein is one of the early assembly proteins of the 50S ribosomal subunit, although it is not seen to bind rRNA by itself. It is important during the early stages of 50S assembly. The protein is Large ribosomal subunit protein uL13 of Desulfitobacterium hafniense (strain Y51).